We begin with the raw amino-acid sequence, 185 residues long: Elongation factor P (185 aa).

Belongs to the elongation factor P family.

It localises to the cytoplasm. The protein operates within protein biosynthesis; polypeptide chain elongation. In terms of biological role, involved in peptide bond synthesis. Stimulates efficient translation and peptide-bond synthesis on native or reconstituted 70S ribosomes in vitro. Probably functions indirectly by altering the affinity of the ribosome for aminoacyl-tRNA, thus increasing their reactivity as acceptors for peptidyl transferase. The protein is Elongation factor P of Geobacillus thermodenitrificans (strain NG80-2).